The following is a 177-amino-acid chain: PLAC8-like protein 1 (177 aa).

It belongs to the cornifelin family.

This chain is PLAC8-like protein 1 (PLAC8L1), found in Homo sapiens (Human).